Here is a 173-residue protein sequence, read N- to C-terminus: C-phycocyanin-2 beta subunit (173 aa).

At N73 the chain carries N4-methylasparagine. C83 and C154 together coordinate (2R,3E)-phycocyanobilin.

Belongs to the phycobiliprotein family. Heterodimer of an alpha and a beta subunit, which further assembles into trimers and the trimers into hexamers. In terms of processing, contains two covalently linked bilin chromophores.

The protein localises to the cellular thylakoid membrane. Functionally, light-harvesting photosynthetic bile pigment-protein from the phycobiliprotein complex (phycobilisome, PBS). Phycocyanin is the major phycobiliprotein in the PBS rod. In Synechococcus sp. (strain ATCC 27144 / PCC 6301 / SAUG 1402/1) (Anacystis nidulans), this protein is C-phycocyanin-2 beta subunit (cpcB2).